The chain runs to 434 residues: Putative nuclease OPG089 (434 aa).

Mg(2+)-binding residues include aspartate 33, aspartate 74, glutamate 168, aspartate 170, aspartate 196, and aspartate 198.

It belongs to the XPG/RAD2 endonuclease family. FEN1 subfamily. The cofactor is Mg(2+).

The protein localises to the virion. Putative nuclease that seems to be required for double-strand break repair, homologous recombination, and production of full-length viral genomic DNA. The sequence is that of Putative nuclease OPG089 (OPG089) from Homo sapiens (Human).